We begin with the raw amino-acid sequence, 452 residues long: Probable phosphoglucosamine mutase (452 aa).

The Phosphoserine intermediate role is filled by Ser96. Positions 96, 235, 237, and 239 each coordinate Mg(2+). Ser96 carries the post-translational modification Phosphoserine.

It belongs to the phosphohexose mutase family. Mg(2+) serves as cofactor. Activated by phosphorylation.

It catalyses the reaction alpha-D-glucosamine 1-phosphate = D-glucosamine 6-phosphate. Its function is as follows. Catalyzes the conversion of glucosamine-6-phosphate to glucosamine-1-phosphate. The protein is Probable phosphoglucosamine mutase of Methanopyrus kandleri (strain AV19 / DSM 6324 / JCM 9639 / NBRC 100938).